Consider the following 2690-residue polypeptide: Non-reducing polyketide synthase pigA (2690 aa).

One can recognise a Starter acyltransferase (SAT) domain in the interval 96 to 211 (NILLSPLVVI…AELSRVLQDF (116 aa)). The Nucleophile; for transacylase activity role is filled by cysteine 140. Histidine 258 acts as the Proton donor/acceptor; for transacylase activity in catalysis. The region spanning 388 to 804 (ENDIAVIGMS…GSNASLIVTQ (417 aa)) is the Ketosynthase family 3 (KS3) domain. Active-site for beta-ketoacyl synthase activity residues include cysteine 553, histidine 688, and histidine 727. One can recognise a Malonyl-CoA:ACP transacylase (MAT) domain in the interval 915 to 1182 (FGGQISTFVG…VQRLAKQHPS (268 aa)). An N-terminal hotdog fold region spans residues 1296–1426 (LTFVGYQDKD…GKVFFRSVDD (131 aa)). Residues 1296–1602 (LTFVGYQDKD…YAKVPKMSMS (307 aa)) form the PKS/mFAS DH domain. The interval 1323 to 1600 (LVSGHLIAQT…INYAKVPKMS (278 aa)) is product template (PT) domain. The active-site Proton acceptor; for dehydratase activity is histidine 1327. The interval 1454–1602 (ADDIIQGRNI…YAKVPKMSMS (149 aa)) is C-terminal hotdog fold. Aspartate 1510 (proton donor; for dehydratase activity) is an active-site residue. Residues 1657-1731 (PDISGKVRAM…GLLRCIQEAL (75 aa)) form the Carrier 1 domain. Serine 1691 carries the O-(pantetheine 4'-phosphoryl)serine modification. The disordered stretch occupies residues 1731 to 1764 (LGPSEGVEEETDNEEGEDGESSENPSVFTPSDAA). The segment covering 1736 to 1751 (GVEEETDNEEGEDGES) has biased composition (acidic residues). Polar residues predominate over residues 1755 to 1764 (PSVFTPSDAA). The 75-residue stretch at 1768–1842 (SSAKADVAEF…EFDVKVNGKS (75 aa)) folds into the Carrier 2 domain. At serine 1802 the chain carries O-(pantetheine 4'-phosphoryl)serine. A methyltransferase domain region spans residues 1948 to 2255 (QTLERIKYLP…EVNIQRIFLA (308 aa)). The Thioester reductase (TE) domain maps to 2320–2564 (VTGATGSLGS…LSWTPVNDVA (245 aa)).

The cofactor is pantetheine 4'-phosphate.

Its pathway is secondary metabolite biosynthesis. In terms of biological role, non-reducing polyketide synthase; part of the gene cluster that mediates the biosynthesis of azaphilone pigments (MonAzPs), a complex mixture of compounds with a common azaphilone skeleton very widely used as food colorants. PigA catalyzes the first step of MonAzPs biosynthesis and forms the hexaketide precursor from successive condensations of five malonyl-CoA units, with a simple acetyl-CoA starter unit. The starter acyl transferase (SAT) domain of pigA selects an acetyl-CoA starter unit, and the ketoacyl synthase (KS)-acyl transferase (AT)-acyl carrier protein (ACP) domains extend this starter unit five times with malonyl-CoA in five successive decarboxylative Claisen condensation cycles. The methyltransferase (MT) domain conducts a single C-methylation at C-4, most likely at the pentaketide stage. The reactive hexaketide chain then undergoes a product template (PT) domain-mediated C-2 to C-7 aldol cyclization to afford the first aromatic ring, followed by reductive release of the first pathway intermediate by the NADPH-dependent reductive release (R) domain. The role of esterase pigG is not clear, but it may play at most a supplementary role in the formation of the benzaldehyde produced by the pigA nrPKS. This very reactive benzaldehyde is intercepted by the pigC ketoreductase that to provide the first stable enzyme-free MonAzPs intermediate, 6-(4-hydroxy-2-oxopentyl)-3-methyl-2,4-dioxocyclohexane carbaldehyde, also known as M7PKS-1. The FAD-dependent monooxygenase pigN hydroxylates M7PKS-1 at C-4, which triggers the formation of the pyran ring. PigJ, pigK and pigD are involved in the acetylation of the pyran ring. PigJ and pigK form the two subunits of a dedicated fungal FAS that produces the side chain fatty acyl moiety of MonAzPs and pigD transfers the fatty acyl chain to the C-4 alcohol. PigM and pigO are involved in the elimination of the omega-1 alcohol. PigM acts as an O-acetyltransferase that synthesizes the putative O-11 acetyl intermediate whereas pigO eliminates acetic acid to yield an intermediate with a C10(11) double bond. The dehydration of the C-11 alcohol followed by the reduction of the C6(7) double bond by the NAD(P)H-dependent oxidoreductase pigE increases the electrophilicity of the C-5 ketone of the resulting acyl benzopyran. This in turn sets up the C-5 ketone for an intramolecular Knoevenagel aldol condensation with the C-20 enol of the side chain. This condensation affords the characteristic linear tricyclic carbon skeletons of the yellow pigments that serve as the common precursors for the classical yellow pigments monascin and ankaflavin, orange pigments rubopunctatin and monascorubrin, and red pigments ribropunctamine and monascorubramine. The FAD-dependent oxidoreductase pigF is especially invoved in the biosynthesis of orange and red pigments via desaturation of C6(7). The protein is Non-reducing polyketide synthase pigA of Monascus ruber (Mold).